The primary structure comprises 36 residues: Photosystem I reaction center subunit VIII (36 aa).

The helical transmembrane segment at Ser-8 to Leu-28 threads the bilayer.

The protein belongs to the PsaI family.

It localises to the plastid. Its subcellular location is the chloroplast thylakoid membrane. May help in the organization of the PsaL subunit. The chain is Photosystem I reaction center subunit VIII from Daucus carota (Wild carrot).